The following is a 339-amino-acid chain: DNA-directed RNA polymerase subunit alpha (339 aa).

Residues 1 to 235 (MTIQKNWQEL…DQLNVFVNFE (235 aa)) form an alpha N-terminal domain (alpha-NTD) region. Residues 251-339 (FNPAFLKKVD…ELAKRFEDHY (89 aa)) are alpha C-terminal domain (alpha-CTD).

The protein belongs to the RNA polymerase alpha chain family. As to quaternary structure, homodimer. The RNAP catalytic core consists of 2 alpha, 1 beta, 1 beta' and 1 omega subunit. When a sigma factor is associated with the core the holoenzyme is formed, which can initiate transcription.

It carries out the reaction RNA(n) + a ribonucleoside 5'-triphosphate = RNA(n+1) + diphosphate. DNA-dependent RNA polymerase catalyzes the transcription of DNA into RNA using the four ribonucleoside triphosphates as substrates. The sequence is that of DNA-directed RNA polymerase subunit alpha from Rhodopseudomonas palustris (strain BisB18).